Here is a 752-residue protein sequence, read N- to C-terminus: RNA-directed RNA polymerase catalytic subunit (752 aa).

2 short sequence motifs (nuclear localization signal) span residues 187–195 and 203–216; these read IKKKLPAKN and RIPM…TRVE. Residues 249–256 form a promoter-binding site region; it reads RGFVLVVE. One can recognise a RdRp catalytic domain in the interval 286 to 482; sequence VAKMLSNCPP…GINMSKKKSY (197 aa).

It belongs to the influenza viruses polymerase PB1 family. In terms of assembly, influenza RNA polymerase is composed of three subunits: PB1, PB2 and PA. Interacts (via N-terminus) with PA (via C-terminus). Interacts (via C-terminus) with PB2 (via N-terminus); this interaction is essential for transcription initiation. Phosphorylated by host PRKCA.

Its subcellular location is the host nucleus. The protein resides in the host cytoplasm. It catalyses the reaction RNA(n) + a ribonucleoside 5'-triphosphate = RNA(n+1) + diphosphate. Its function is as follows. RNA-dependent RNA polymerase which is responsible for replication and transcription of virus RNA segments. The transcription of viral mRNAs occurs by a unique mechanism called cap-snatching. 5' methylated caps of cellular mRNAs are cleaved after 10-13 nucleotides by PA. In turn, these short capped RNAs are used as primers by PB1 for transcription of viral mRNAs. During virus replication, PB1 initiates RNA synthesis and copy vRNA into complementary RNA (cRNA) which in turn serves as a template for the production of more vRNAs. This is RNA-directed RNA polymerase catalytic subunit from Influenza B virus (strain B/Ann Arbor/1/1966 [wild-type]).